A 130-amino-acid chain; its full sequence is Small ribosomal subunit protein uS8 (130 aa).

The protein belongs to the universal ribosomal protein uS8 family. Part of the 30S ribosomal subunit. Contacts proteins S5 and S12.

Functionally, one of the primary rRNA binding proteins, it binds directly to 16S rRNA central domain where it helps coordinate assembly of the platform of the 30S subunit. The chain is Small ribosomal subunit protein uS8 from Hahella chejuensis (strain KCTC 2396).